A 1506-amino-acid chain; its full sequence is ABC transporter C family member 9 (1506 aa).

The next 11 membrane-spanning stretches (helical) occupy residues 37–57 (MQVT…FGVV), 84–104 (ISLL…LLLF), 116–136 (VSVF…SVVV), 150–170 (MLRS…AHFI), 179–199 (FQDY…AVSI), 315–335 (AINA…PYLI), 350–370 (LNHG…ETVT), 427–447 (FIWY…AIYI), 452–472 (LGLG…CNYP), 541–561 (FILW…CMLM), and 567–587 (AGAV…IFGL). The ABC transmembrane type-1 1 domain occupies 314-596 (AAINAVFAVV…LPDLLSALVQ (283 aa)). One can recognise an ABC transporter 1 domain in the interval 630–853 (VEIENGAFSW…NIGFEVLVGA (224 aa)). 665-672 (GAVGSGKS) lines the ATP pocket. Helical transmembrane passes span 934 to 956 (LLVP…SNYW), 976 to 996 (ILLV…ARTI), 1048 to 1068 (MAVK…TIFV), 1167 to 1187 (LSHF…EGVI), and 1191 to 1211 (IAGL…TVIW). In terms of domain architecture, ABC transmembrane type-1 2 spans 936 to 1218 (VPFIILAQSC…VIWNICNAEN (283 aa)). In terms of domain architecture, ABC transporter 2 spans 1257–1489 (FRDLQVRYAE…EDSFFSKLIK (233 aa)). Residue 1289–1296 (GRTGSGKS) coordinates ATP.

It belongs to the ABC transporter superfamily. ABCC family. Conjugate transporter (TC 3.A.1.208) subfamily. As to expression, ubiquitous.

Its subcellular location is the membrane. It carries out the reaction ATP + H2O + xenobioticSide 1 = ADP + phosphate + xenobioticSide 2.. Pump for glutathione S-conjugates. The polypeptide is ABC transporter C family member 9 (ABCC9) (Arabidopsis thaliana (Mouse-ear cress)).